The sequence spans 130 residues: Small ribosomal subunit protein uS11 (130 aa).

A disordered region spans residues 111 to 130; the sequence is IRDVTPVPHNGSRPPKRRRA.

The protein belongs to the universal ribosomal protein uS11 family. As to quaternary structure, part of the 30S ribosomal subunit. Interacts with proteins S7 and S18. Binds to IF-3.

Functionally, located on the platform of the 30S subunit, it bridges several disparate RNA helices of the 16S rRNA. Forms part of the Shine-Dalgarno cleft in the 70S ribosome. In Lactobacillus acidophilus (strain ATCC 700396 / NCK56 / N2 / NCFM), this protein is Small ribosomal subunit protein uS11.